Here is a 366-residue protein sequence, read N- to C-terminus: DNA primase large subunit PriL (366 aa).

[4Fe-4S] cluster contacts are provided by cysteine 227, cysteine 298, cysteine 307, and cysteine 314.

Belongs to the eukaryotic-type primase large subunit family. In terms of assembly, heterodimer of a small subunit (PriS) and a large subunit (PriL). [4Fe-4S] cluster serves as cofactor.

Functionally, regulatory subunit of DNA primase, an RNA polymerase that catalyzes the synthesis of short RNA molecules used as primers for DNA polymerase during DNA replication. Stabilizes and modulates the activity of the small subunit, increasing the rate of DNA synthesis, and conferring RNA synthesis capability. The DNA polymerase activity may enable DNA primase to also catalyze primer extension after primer synthesis. May also play a role in DNA repair. The sequence is that of DNA primase large subunit PriL from Methanocella arvoryzae (strain DSM 22066 / NBRC 105507 / MRE50).